We begin with the raw amino-acid sequence, 76 residues long: Sec-independent protein translocase protein TatA (76 aa).

Residues 1–21 (MGGISITQLLIIVAIVVLLFG) form a helical membrane-spanning segment. Residues 45 to 76 (DDNKEKDAEFKSLSDDSETTAKTEKAKDKEQA) form a disordered region.

This sequence belongs to the TatA/E family. In terms of assembly, the Tat system comprises two distinct complexes: a TatABC complex, containing multiple copies of TatA, TatB and TatC subunits, and a separate TatA complex, containing only TatA subunits. Substrates initially bind to the TatABC complex, which probably triggers association of the separate TatA complex to form the active translocon.

It is found in the cell inner membrane. Functionally, part of the twin-arginine translocation (Tat) system that transports large folded proteins containing a characteristic twin-arginine motif in their signal peptide across membranes. TatA could form the protein-conducting channel of the Tat system. In Pasteurella multocida (strain Pm70), this protein is Sec-independent protein translocase protein TatA.